A 246-amino-acid polypeptide reads, in one-letter code: Protein-lysine N-methyltransferase EFM6 (246 aa).

S-adenosyl-L-methionine-binding positions include Trp51, 87–89 (GSG), Asp115, Trp143, and Ala169.

The protein belongs to the class I-like SAM-binding methyltransferase superfamily. METTL21 family. EFM6 subfamily.

It is found in the cytoplasm. S-adenosyl-L-methionine-dependent protein-lysine N-methyltransferase that methylates elongation factor 1-alpha (TEF1 and TEF2) at 'Lys-390'. The sequence is that of Protein-lysine N-methyltransferase EFM6 from Saccharomyces cerevisiae (strain ATCC 204508 / S288c) (Baker's yeast).